Consider the following 427-residue polypeptide: Serine--tRNA ligase (427 aa).

231–233 (TAE) contacts L-serine. 262–264 (RSE) contributes to the ATP binding site. Residue Glu-285 participates in L-serine binding. Residue 349-352 (EISS) coordinates ATP. L-serine is bound at residue Ser-385.

It belongs to the class-II aminoacyl-tRNA synthetase family. Type-1 seryl-tRNA synthetase subfamily. Homodimer. The tRNA molecule binds across the dimer.

The protein resides in the cytoplasm. It carries out the reaction tRNA(Ser) + L-serine + ATP = L-seryl-tRNA(Ser) + AMP + diphosphate + H(+). The enzyme catalyses tRNA(Sec) + L-serine + ATP = L-seryl-tRNA(Sec) + AMP + diphosphate + H(+). Its pathway is aminoacyl-tRNA biosynthesis; selenocysteinyl-tRNA(Sec) biosynthesis; L-seryl-tRNA(Sec) from L-serine and tRNA(Sec): step 1/1. In terms of biological role, catalyzes the attachment of serine to tRNA(Ser). Is also able to aminoacylate tRNA(Sec) with serine, to form the misacylated tRNA L-seryl-tRNA(Sec), which will be further converted into selenocysteinyl-tRNA(Sec). In Listeria welshimeri serovar 6b (strain ATCC 35897 / DSM 20650 / CCUG 15529 / CIP 8149 / NCTC 11857 / SLCC 5334 / V8), this protein is Serine--tRNA ligase.